A 458-amino-acid chain; its full sequence is Protein amnionless (458 aa).

The signal sequence occupies residues 1–19 (MGALGRALLWLQLCALARA). The Extracellular portion of the chain corresponds to 20–366 (AYKLWVPTTD…LGSGSRAGLA (347 aa)). N-linked (GlcNAc...) asparagine glycosylation is present at Asn35. Disulfide bonds link Cys43–Cys96, Cys137–Cys213, Cys205–Cys211, Cys223–Cys249, Cys234–Cys250, and Cys239–Cys253. Positions 67–87 (SDMLLPRDGEFVLASGAGFGA) are interaction with CUBN. Residues 203–254 (GACADPSGCVCGDAEVQPWICAALLQPLGGRCPPAACPDALRPEGQCCDLCG) enclose the VWFC domain. The chain crosses the membrane as a helical span at residues 367–387 (GGVAAGLLLLLLALAAGLLLL). At 388-458 (RRAPRLRWTK…VNPLFAEAEA (71 aa)) the chain is on the cytoplasmic side. A disordered region spans residues 422 to 446 (SVGPVPRTPQPPPAQQAGSSSTSRS).

Interacts (via extracellular region) with CUBN/cubilin. This gives rise to a huge complex containing one AMN chain and three CUBN chains. N-glycosylated. In terms of processing, a soluble form arises by proteolytic removal of the membrane anchor. In terms of tissue distribution, detected in kidney (at protein level). Detected in kidney and ileum.

It localises to the apical cell membrane. The protein localises to the cell membrane. It is found in the endosome membrane. The protein resides in the membrane. Its subcellular location is the coated pit. It localises to the secreted. Membrane-bound component of the endocytic receptor formed by AMN and CUBN. Required for normal CUBN glycosylation and trafficking to the cell surface. The complex formed by AMN and CUBN is required for efficient absorption of vitamin B12. Required for normal CUBN-mediated protein transport in the kidney. The polypeptide is Protein amnionless (AMN) (Canis lupus familiaris (Dog)).